The sequence spans 159 residues: NADH-quinone oxidoreductase subunit B (159 aa).

[4Fe-4S] cluster contacts are provided by C37, C38, C102, and C132.

This sequence belongs to the complex I 20 kDa subunit family. As to quaternary structure, NDH-1 is composed of 14 different subunits. Subunits NuoB, C, D, E, F, and G constitute the peripheral sector of the complex. It depends on [4Fe-4S] cluster as a cofactor.

Its subcellular location is the cell inner membrane. The catalysed reaction is a quinone + NADH + 5 H(+)(in) = a quinol + NAD(+) + 4 H(+)(out). Its function is as follows. NDH-1 shuttles electrons from NADH, via FMN and iron-sulfur (Fe-S) centers, to quinones in the respiratory chain. The immediate electron acceptor for the enzyme in this species is believed to be ubiquinone. Couples the redox reaction to proton translocation (for every two electrons transferred, four hydrogen ions are translocated across the cytoplasmic membrane), and thus conserves the redox energy in a proton gradient. The polypeptide is NADH-quinone oxidoreductase subunit B (Variovorax paradoxus (strain S110)).